We begin with the raw amino-acid sequence, 533 residues long: MKREHKLEHEDMSSGSGKSGVCWEDDGGGMDELLAVVGYKVKSSDMAEVAQKLEQLEQAMMGNNFHDHDESTIAQHLSNDTVHYNPSDISNWLQTMLSNFDPQPNNPSVNSDDNDLNAIPGKAIYAADEFTSRKRVKRNESVTVTTESTTTRPIMVVETQEKGIRLVHSLMACAEAVEQNNLKMAEALVKQIGYLAVSQEGAMRKVATYFAEGLARRIYGVFPQHSVSDSLQIHFYETCPNLKFAHFTANQAILEAFQGKSSVHVIDFSINQGMQWPALMQALALRPGGPPAFRLTGIGPPASDNSDHLQQVGWRLAQFAQTIHVQFEYRGFVANSLADLDASMLELRSPETESVAVNSVFELHKLNARPGALEKVFSVIRQIRPEIVTVVEQEANHNGPAFLDRFTESLHYYSTLFDSLEGSSVEPQDKAMSEVYLGKQICNVVACEGTDRVERHETLNQWRNRFNSAGFSPVHLGSNAFKQASMLLALFAGGDGYKVEENDGCLMLGWHTRPLIATSAWKLAAANSVVVSH.

A compositionally biased stretch (basic and acidic residues) spans 1–12 (MKREHKLEHEDM). The interval 1-24 (MKREHKLEHEDMSSGSGKSGVCWE) is disordered. A DELLA motif motif is present at residues 31-35 (DELLA). The GRAS domain occupies 157 to 522 (VETQEKGIRL…RPLIATSAWK (366 aa)). Residues 164–218 (IRLVHSLMACAEAVEQNNLKMAEALVKQIGYLAVSQEGAMRKVATYFAEGLARRI) are leucine repeat I (LRI). The segment at 166–203 (LVHSLMACAEAVEQNNLKMAEALVKQIGYLAVSQEGAM) is required for possible homodimerization. The short motif at 171–175 (MACAE) is the LxCxE motif; degenerate element. The interval 232–297 (QIHFYETCPN…GGPPAFRLTG (66 aa)) is VHIID. Positions 263–267 (VHVID) match the VHIID motif. The segment at 311-343 (QVGWRLAQFAQTIHVQFEYRGFVANSLADLDAS) is leucine repeat II (LRII). The segment at 355–443 (VAVNSVFELH…EVYLGKQICN (89 aa)) is PFYRE. An LXXLL motif; degenerate motif is present at residues 363 to 367 (LHKLN). The tract at residues 446-522 (ACEGTDRVER…RPLIATSAWK (77 aa)) is SAW.

This sequence belongs to the GRAS family. DELLA subfamily. In terms of assembly, may be a homodimer. Post-translationally, ubiquitinated. Upon GA application it is ubiquitinated, leading to its subsequent degradation.

Its subcellular location is the nucleus. In terms of biological role, probable transcriptional regulator that acts as a repressor of the gibberellin (GA) signaling pathway. Probably acts by participating in large multiprotein complexes that repress transcription of GA-inducible genes. Upon GA application, it is degraded by the proteasome, allowing the GA signaling pathway. Together with DELLA1, required to enable arbuscule development during arbuscular mycorrhizal (AM) symbiosis with AM fungi (e.g. Glomus versiforme) via the regulation of RAM1 which, in turn, regulates various AM genes (e.g. NSP1, NSP2, PT4, LEC5, RAM2, EXO70I, STR and RAD1). The polypeptide is DELLA protein 2 (Medicago truncatula (Barrel medic)).